The primary structure comprises 525 residues: Light-independent protochlorophyllide reductase subunit B (525 aa).

D36 provides a ligand contact to [4Fe-4S] cluster. The Proton donor role is filled by D286. 421–422 (GL) is a substrate binding site.

It belongs to the ChlB/BchB/BchZ family. In terms of assembly, protochlorophyllide reductase is composed of three subunits; ChlL, ChlN and ChlB. Forms a heterotetramer of two ChlB and two ChlN subunits. [4Fe-4S] cluster serves as cofactor.

It catalyses the reaction chlorophyllide a + oxidized 2[4Fe-4S]-[ferredoxin] + 2 ADP + 2 phosphate = protochlorophyllide a + reduced 2[4Fe-4S]-[ferredoxin] + 2 ATP + 2 H2O. The protein operates within porphyrin-containing compound metabolism; chlorophyll biosynthesis (light-independent). Component of the dark-operative protochlorophyllide reductase (DPOR) that uses Mg-ATP and reduced ferredoxin to reduce ring D of protochlorophyllide (Pchlide) to form chlorophyllide a (Chlide). This reaction is light-independent. The NB-protein (ChlN-ChlB) is the catalytic component of the complex. This Prochlorococcus marinus (strain NATL2A) protein is Light-independent protochlorophyllide reductase subunit B.